Here is a 428-residue protein sequence, read N- to C-terminus: Histidine--tRNA ligase (428 aa).

Belongs to the class-II aminoacyl-tRNA synthetase family. In terms of assembly, homodimer.

Its subcellular location is the cytoplasm. It carries out the reaction tRNA(His) + L-histidine + ATP = L-histidyl-tRNA(His) + AMP + diphosphate + H(+). The chain is Histidine--tRNA ligase from Staphylococcus carnosus (strain TM300).